Reading from the N-terminus, the 208-residue chain is Small ribosomal subunit protein uS4 (208 aa).

The S4 RNA-binding domain maps to 98-158 (RRLDNVVYRL…EKSRKIACIN (61 aa)).

It belongs to the universal ribosomal protein uS4 family. In terms of assembly, part of the 30S ribosomal subunit. Contacts protein S5. The interaction surface between S4 and S5 is involved in control of translational fidelity.

One of the primary rRNA binding proteins, it binds directly to 16S rRNA where it nucleates assembly of the body of the 30S subunit. In terms of biological role, with S5 and S12 plays an important role in translational accuracy. The chain is Small ribosomal subunit protein uS4 from Geobacter metallireducens (strain ATCC 53774 / DSM 7210 / GS-15).